A 269-amino-acid chain; its full sequence is Shikimate dehydrogenase (NADP(+)) (269 aa).

Shikimate-binding positions include 14–16 and threonine 61; that span reads SKS. The Proton acceptor role is filled by lysine 65. Residue glutamate 77 participates in NADP(+) binding. 2 residues coordinate shikimate: asparagine 86 and aspartate 102. Residues 126–130, 149–154, and methionine 213 contribute to the NADP(+) site; these read GAGGA and NRTLTK. Tyrosine 215 serves as a coordination point for shikimate. Glycine 238 is an NADP(+) binding site.

Belongs to the shikimate dehydrogenase family. In terms of assembly, homodimer.

The catalysed reaction is shikimate + NADP(+) = 3-dehydroshikimate + NADPH + H(+). It functions in the pathway metabolic intermediate biosynthesis; chorismate biosynthesis; chorismate from D-erythrose 4-phosphate and phosphoenolpyruvate: step 4/7. Its function is as follows. Involved in the biosynthesis of the chorismate, which leads to the biosynthesis of aromatic amino acids. Catalyzes the reversible NADPH linked reduction of 3-dehydroshikimate (DHSA) to yield shikimate (SA). This chain is Shikimate dehydrogenase (NADP(+)), found in Actinobacillus succinogenes (strain ATCC 55618 / DSM 22257 / CCUG 43843 / 130Z).